We begin with the raw amino-acid sequence, 228 residues long: Cytidylate kinase (228 aa).

ATP is bound at residue 11–19 (GPASAGKST).

It belongs to the cytidylate kinase family. Type 1 subfamily.

It localises to the cytoplasm. It carries out the reaction CMP + ATP = CDP + ADP. The catalysed reaction is dCMP + ATP = dCDP + ADP. This chain is Cytidylate kinase, found in Limosilactobacillus reuteri (strain DSM 20016) (Lactobacillus reuteri).